We begin with the raw amino-acid sequence, 194 residues long: Small ribosomal subunit protein uS11m (194 aa).

It belongs to the universal ribosomal protein uS11 family. In terms of assembly, component of the mitochondrial small ribosomal subunit (mt-SSU). Mature mammalian 55S mitochondrial ribosomes consist of a small (28S) and a large (39S) subunit. The 28S small subunit contains a 12S ribosomal RNA (12S mt-rRNA) and 30 different proteins. The 39S large subunit contains a 16S rRNA (16S mt-rRNA), a copy of mitochondrial valine transfer RNA (mt-tRNA(Val)), which plays an integral structural role, and 52 different proteins.

The protein resides in the mitochondrion. This chain is Small ribosomal subunit protein uS11m (MRPS11), found in Homo sapiens (Human).